Here is a 137-residue protein sequence, read N- to C-terminus: Proofreading thioesterase EntH (137 aa).

The Nucleophile or proton acceptor role is filled by Glu-63.

Belongs to the thioesterase PaaI family. As to quaternary structure, homotetramer. Dimer of dimers. Interacts specifically with the aryl carrier protein (ArCP) domain of EntB.

Its subcellular location is the cytoplasm. The protein operates within siderophore biosynthesis; enterobactin biosynthesis. In terms of biological role, required for optimal enterobactin synthesis. Acts as a proofreading enzyme that prevents EntB misacylation by hydrolyzing the thioester bound existing between EntB and wrongly charged molecules. This is Proofreading thioesterase EntH from Cronobacter turicensis (strain DSM 18703 / CCUG 55852 / LMG 23827 / z3032).